The primary structure comprises 352 residues: Uricase (352 aa).

The disordered stretch occupies residues 1–32 (MFATPLRQPAAANHQTPKNSAGMDEHGKPYQY). The segment covering 23–32 (MDEHGKPYQY) has biased composition (basic and acidic residues). Residues K41 and T86 each act as charge relay system in the active site. The urate site is built by T86, D87, F214, R231, V279, Q280, and N306. The active-site Charge relay system is H308. The Microbody targeting signal motif lies at 350–352 (SHL).

The protein belongs to the uricase family. In terms of tissue distribution, malpighian tubules.

Its subcellular location is the peroxisome. The enzyme catalyses urate + O2 + H2O = 5-hydroxyisourate + H2O2. Its pathway is purine metabolism; urate degradation; (S)-allantoin from urate: step 1/3. Its activity is regulated as follows. Repressed by 20-hydroxyecdysone. Functionally, catalyzes the oxidation of uric acid to 5-hydroxyisourate, which is further processed to form (S)-allantoin. The sequence is that of Uricase (Uro) from Drosophila melanogaster (Fruit fly).